Here is a 1450-residue protein sequence, read N- to C-terminus: MATRATRAASEVAKTKAATNLPSIRKRKSIENEEEESKHNTSINDDGELDSDIDEEDESKFEKEFTVKKRQKKSPAKTQQQPQKSITTPTKPTPTKTTSKPTKPSATTSPSQQKQSSQSSQNTSKKQATSSSSQQSTQQKKKETKIKYNLKPINIERLATYDQHMSGTLSNEKIIKRLKKLDEYLQDKKRGNTEGLEIVLEVLIDPKFADNKIFEIRLMTSCCLSEIFRIYAPTLPFDMVVLKVVFKLFTEQVLQGDKVDKKLFPQYFQMLERLSVIKVFALLALVDSSMLTPFFKDCLSRVHGDKEHQPMDIMFSTLLNTILESLEEVPTSLWNELLESLIEREKGGVPTSKAIFTHDLIETNSRFLQVHFDLFLQDLLEPEILAGGQQQQQQDSSLSNNGISKQLKKKKNEILFEMFNILPEFIYPALQNLEFDLEDVNASIRKGAAIVLSRCYSTESASDELIAQRPTLYTTFLNRFHDVDIKIRTVMMEFSEHFTTTSDLEMERVLKSVRDRFRDSEPDIRIKAIQIFQKYIIKNPELMNPELMSEYLERVRDKDSKVRKDAEISLSTVWRSVREKYGPIDDWSNTLIDCFSTIPNTLIHCLGLYDDDKYRIEIAFDSILLPQHSDVKNRSQVFLEIYKYLDESNKQLFKKYLEEKKSLRQEFLALIQFLKNPKVVGGSTTPTSKKSQPPQQQQQQQQQQQQQLQQPENDIEVYITHVDNLLPKFIGESSKKLVRQLITPSNKKILDLLVLISDINTTFQEQYNIKISIISKAQNESSFSEFIKYMVNKLAYSIVGKENIKYLLRGLRSDLGLDNFDKNNPIDLLEEFNEKIYEKEVKDGVPETLEVLLMLSQVYANIFDDYGDQLVGFLTCSKSIVYPVLQILSNSWKTLKLSKKTLKSTLDMLLRLTQVPQPTLARLAFKTFIKFATPALTSINSTNGKVDNNKLVVTLKDLANNLFDQLEDKSKNLLSILEVIGCLAKGYSLVLSEHLDTLDILLIKKIMTGVCTLDFNQKVQLNKSVEHHLNTSYSKDVLIKIAAIKCMSNYLLGLREITKKSHEMVNMLFEFYIGLDKNKTYNDLEKSHLKIHIAIGLLRVFQRSQYEKEITPQQFILICNSTSITTKQRGDPLIRRLIEKLAKVMILNRLPMKYMAAFGMAAQQPYSVLALVRKHSTSIIKTRRMVISRLAASLSMAKNLTEFYPESSMPYFLYVVSHREDFERDAPDYIESACYLNFFIDLLVEEADNYSIIHTIFTKLKRSTDALDKKSKNHIIAAELGLQILTHQYQQKKWKPQKHPIVIVLPEKFYIIHDDQDEMSIDDEVTSIKLPSLLPKRFKLPPLPSITDQNNNNNNNNTNSTNNDESEKDENNNNKNDNDNDNDNDDNSTTAVPQKSIISKPPAKKVSKKAAAKQKSPKKKTNKKKKQSSSEEEVSSSEEEDESQDEEVEN.

Disordered stretches follow at residues 1–145 (MATR…KETK), 680–707 (VGGSTTPTSKKSQPPQQQQQQQQQQQQQ), and 1340–1450 (LPPL…EVEN). Acidic residues predominate over residues 45–59 (DDGELDSDIDEEDES). Over residues 77–138 (KTQQQPQKSI…TSSSSQQSTQ (62 aa)) the composition is skewed to low complexity. Residues 650-716 (KQLFKKYLEE…QLQQPENDIE (67 aa)) adopt a coiled-coil conformation. The segment covering 682-691 (GSTTPTSKKS) has biased composition (polar residues). Low complexity-rich tracts occupy residues 692–707 (QPPQQQQQQQQQQQQQ) and 1350–1363 (NNNNNNNNTNSTNN). Residues 1369–1378 (DENNNNKNDN) are compositionally biased toward basic and acidic residues. The span at 1387–1401 (NSTTAVPQKSIISKP) shows a compositional bias: low complexity. The span at 1402-1427 (PAKKVSKKAAAKQKSPKKKTNKKKKQ) shows a compositional bias: basic residues. The segment covering 1430 to 1450 (SEEEVSSSEEEDESQDEEVEN) has biased composition (acidic residues).

The protein belongs to the PDS5 family.

Its subcellular location is the nucleus. In terms of biological role, may regulate sister chromatid cohesion during mitosis and couple it to DNA replication. This Dictyostelium discoideum (Social amoeba) protein is Sister chromatid cohesion protein PDS5 homolog.